Here is a 152-residue protein sequence, read N- to C-terminus: D-erythrulose-4-phosphate isomerase 2 (152 aa).

Cys70 functions as the Proton acceptor in the catalytic mechanism.

The protein belongs to the LacAB/RpiB family.

The catalysed reaction is D-erythrulose 4-phosphate = D-erythrose 4-phosphate. It functions in the pathway carbohydrate metabolism; erythritol degradation. The protein operates within carbohydrate metabolism; D-threitol degradation. Its pathway is carbohydrate metabolism; L-threitol degradation. In terms of biological role, catalyzes the isomerization of D-erythrulose-4P to D-erythrose-4P. Involved in the degradation pathways of L-threitol, D-threitol and erythritol, that allow M.smegmatis to grow on these compounds as the sole carbon source. This chain is D-erythrulose-4-phosphate isomerase 2, found in Mycolicibacterium smegmatis (strain ATCC 700084 / mc(2)155) (Mycobacterium smegmatis).